The primary structure comprises 364 residues: Peptide chain release factor 1 (364 aa).

Position 237 is an N5-methylglutamine (Q237).

The protein belongs to the prokaryotic/mitochondrial release factor family. Methylated by PrmC. Methylation increases the termination efficiency of RF1.

The protein resides in the cytoplasm. In terms of biological role, peptide chain release factor 1 directs the termination of translation in response to the peptide chain termination codons UAG and UAA. The polypeptide is Peptide chain release factor 1 (Rubrobacter xylanophilus (strain DSM 9941 / JCM 11954 / NBRC 16129 / PRD-1)).